Here is a 186-residue protein sequence, read N- to C-terminus: Small ribosomal subunit protein uS5 (186 aa).

The region spanning 20–83 (FVDKLVHINR…EAAKRDMIFV (64 aa)) is the S5 DRBM domain.

It belongs to the universal ribosomal protein uS5 family. As to quaternary structure, part of the 30S ribosomal subunit. Contacts proteins S4 and S8.

Functionally, with S4 and S12 plays an important role in translational accuracy. In terms of biological role, located at the back of the 30S subunit body where it stabilizes the conformation of the head with respect to the body. The sequence is that of Small ribosomal subunit protein uS5 from Brucella abortus (strain S19).